A 556-amino-acid polypeptide reads, in one-letter code: PTS system fructose-specific EIIB'BC component (556 aa).

2 PTS EIIB type-2 domains span residues 1–85 (MKLF…LANG) and 106–201 (IVAV…KAFK). Cys112 functions as the Phosphocysteine intermediate; for EIIB activity in the catalytic mechanism. Phosphocysteine; by EIIA is present on Cys112. Positions 224–556 (VYKHLMTGVS…AIIKSKNNAE (333 aa)) constitute a PTS EIIC type-2 domain. 10 helical membrane-spanning segments follow: residues 237 to 257 (PLVV…FNVI), 275 to 295 (SGVA…FSIA), 302 to 322 (VGLI…GGII), 324 to 344 (GFLA…PASL), 349 to 369 (PILI…IYLI), 390 to 410 (VNAI…MGGP), 431 to 451 (MAAA…ATWI), 468 to 488 (FVLG…ADPI), 490 to 510 (VIIS…GLNI), and 529 to 549 (LKYL…YAII).

Its subcellular location is the cell inner membrane. The enzyme catalyses D-fructose(out) + N(pros)-phospho-L-histidyl-[protein] = D-fructose 1-phosphate(in) + L-histidyl-[protein]. Functionally, the phosphoenolpyruvate-dependent sugar phosphotransferase system (sugar PTS), a major carbohydrate active transport system, catalyzes the phosphorylation of incoming sugar substrates concomitantly with their translocation across the cell membrane. The enzyme II FruAB PTS system is involved in fructose transport. This chain is PTS system fructose-specific EIIB'BC component, found in Haemophilus influenzae (strain ATCC 51907 / DSM 11121 / KW20 / Rd).